We begin with the raw amino-acid sequence, 416 residues long: Glutamyl-tRNA reductase (416 aa).

Substrate is bound by residues 51-54 (TCNR), S110, 115-117 (EPQ), and Q121. Residue C52 is the Nucleophile of the active site. Position 190–195 (190–195 (GAGQTG)) interacts with NADP(+).

It belongs to the glutamyl-tRNA reductase family. As to quaternary structure, homodimer.

It catalyses the reaction (S)-4-amino-5-oxopentanoate + tRNA(Glu) + NADP(+) = L-glutamyl-tRNA(Glu) + NADPH + H(+). It participates in porphyrin-containing compound metabolism; protoporphyrin-IX biosynthesis; 5-aminolevulinate from L-glutamyl-tRNA(Glu): step 1/2. Catalyzes the NADPH-dependent reduction of glutamyl-tRNA(Glu) to glutamate 1-semialdehyde (GSA). This is Glutamyl-tRNA reductase from Francisella tularensis subsp. tularensis (strain FSC 198).